Consider the following 300-residue polypeptide: Cis-3-alkyl-4-alkyloxetan-2-one decarboxylase (300 aa).

Residues Val33–Asp282 enclose the AB hydrolase-1 domain.

The protein belongs to the AB hydrolase superfamily. As to quaternary structure, homotetramer. Forms a complex with OleC and OleD.

Its subcellular location is the cytoplasm. The catalysed reaction is a cis-3-alkyl-4-alkyloxetan-2-one = a cis-alkene + CO2. Functionally, involved in olefin biosynthesis. Catalyzes the elimination of carbon dioxide from beta-lactones to form the final olefin product. The polypeptide is Cis-3-alkyl-4-alkyloxetan-2-one decarboxylase (Xanthomonas campestris pv. campestris (strain ATCC 33913 / DSM 3586 / NCPPB 528 / LMG 568 / P 25)).